Here is a 466-residue protein sequence, read N- to C-terminus: 3-isopropylmalate dehydratase large subunit (466 aa).

Positions 347, 407, and 410 each coordinate [4Fe-4S] cluster.

This sequence belongs to the aconitase/IPM isomerase family. LeuC type 1 subfamily. In terms of assembly, heterodimer of LeuC and LeuD. [4Fe-4S] cluster serves as cofactor.

The enzyme catalyses (2R,3S)-3-isopropylmalate = (2S)-2-isopropylmalate. The protein operates within amino-acid biosynthesis; L-leucine biosynthesis; L-leucine from 3-methyl-2-oxobutanoate: step 2/4. Catalyzes the isomerization between 2-isopropylmalate and 3-isopropylmalate, via the formation of 2-isopropylmaleate. In Escherichia coli O127:H6 (strain E2348/69 / EPEC), this protein is 3-isopropylmalate dehydratase large subunit.